A 308-amino-acid polypeptide reads, in one-letter code: MLTVQELVDDNADNIPFNWIAGHGAAERNIRDDGMAAADLVGHLNLIHPSRIQVFGQEELAYYSRFDLRRRTHHMDELLIGGVPAILLADGLSPPQDLIDQCDQHQVPLLSTPVAAAQLIDLLRIYLGKKLAPTTTVHGVFMDVLGLGVLITGESGLGKSELALELISRGHGLVADDAVEFSRIAPGMIEGHCPPLLQNMLEVRGLGLLDIRTIFGETSVRRKMRLKLIVHLVRATAQDKFERLPLQDITQDMLGMPVRKVMLQVAAGRNLAVLVEAAVRNTILKLRGIDTLGEFMERQAMAILQSSK.

Active-site residues include histidine 138 and lysine 159. Residue 153-160 participates in ATP binding; that stretch reads GESGLGKS. Serine 160 lines the Mg(2+) pocket. Aspartate 177 acts as the Proton acceptor; for phosphorylation activity. Proton donor; for dephosphorylation activity in catalysis. The interval 201 to 210 is important for the catalytic mechanism of both phosphorylation and dephosphorylation; that stretch reads LEVRGLGLLD. Glutamate 202 contributes to the Mg(2+) binding site. The active site involves arginine 243. An important for the catalytic mechanism of dephosphorylation region spans residues 264 to 269; it reads QVAAGR.

This sequence belongs to the HPrK/P family. As to quaternary structure, homohexamer. Requires Mg(2+) as cofactor.

It carries out the reaction [HPr protein]-L-serine + ATP = [HPr protein]-O-phospho-L-serine + ADP + H(+). It catalyses the reaction [HPr protein]-O-phospho-L-serine + phosphate + H(+) = [HPr protein]-L-serine + diphosphate. Its function is as follows. Catalyzes the ATP- as well as the pyrophosphate-dependent phosphorylation of a specific serine residue in HPr, a phosphocarrier protein of the phosphoenolpyruvate-dependent sugar phosphotransferase system (PTS). HprK/P also catalyzes the pyrophosphate-producing, inorganic phosphate-dependent dephosphorylation (phosphorolysis) of seryl-phosphorylated HPr (P-Ser-HPr). The protein is HPr kinase/phosphorylase of Bordetella petrii (strain ATCC BAA-461 / DSM 12804 / CCUG 43448).